We begin with the raw amino-acid sequence, 170 residues long: Ankyrin repeat-containing protein C105.02c (170 aa).

2 ANK repeats span residues 46-76 (LGND…NLNN) and 81-116 (TGDT…DPLL). Residues 150–170 (SADVVADDDDEEEGSGESDEE) are disordered. The segment covering 154-170 (VADDDDEEEGSGESDEE) has biased composition (acidic residues).

Its subcellular location is the cytoplasm. It localises to the nucleus. This is Ankyrin repeat-containing protein C105.02c from Schizosaccharomyces pombe (strain 972 / ATCC 24843) (Fission yeast).